An 84-amino-acid polypeptide reads, in one-letter code: Apovitellenin-1 (84 aa).

The protein belongs to the apovitellenin family. As to quaternary structure, monomer.

In terms of biological role, protein component of the very low density lipoprotein (VLDL) of egg-laying females. Potent lipoprotein lipase inhibitor, preventing the loss of triglycerides from VLDL on their way from the liver to the growing oocytes. This chain is Apovitellenin-1, found in Dromaius novaehollandiae (Emu).